A 153-amino-acid chain; its full sequence is Fimbrial protein EcpC (153 aa).

Positions 1–8 (MLKQVQKG) are cleaved as a propeptide — leader sequence. Residue Phe-9 is modified to N-methylphenylalanine. Residues 9-29 (FTLIELMIVIAIIGILAAIAL) traverse the membrane as a helical segment. Cys-130 and Cys-143 are joined by a disulfide.

Belongs to the N-Me-Phe pilin family.

Its subcellular location is the fimbrium. It is found in the membrane. The protein is Fimbrial protein EcpC (ecpC) of Eikenella corrodens.